The sequence spans 441 residues: Lysine histidine transporter-like 2 (441 aa).

Residues 1–32 are Cytoplasmic-facing; that stretch reads MEKSQSSPTKDASTKQKNVDDWLPITSSRNAK. A helical membrane pass occupies residues 33-53; that stretch reads WWYSAFHNVTAMVGAGVLSLP. The Extracellular segment spans residues 54 to 58; the sequence is YAMSN. Residues 59-79 traverse the membrane as a helical segment; sequence LGWGPGVTIMIMSWLITFYTL. The Cytoplasmic segment spans residues 80–110; that stretch reads WQMVQMHEMVPGKRFDRYHELGQHAFGEKLG. Residues 111–131 traverse the membrane as a helical segment; the sequence is LWIVVPQQLIVEVGVDIVYMV. Topologically, residues 132–155 are extracellular; that stretch reads TGGKSLKKIHDLLCTDCKNIRTTY. Helical transmembrane passes span 156-176 and 177-197; these read WIMI…FNSI and SIVS…AWAT. Topologically, residues 198 to 222 are extracellular; it reads SVKKGVHPNVDYSSRASTTSGNVFN. The chain crosses the membrane as a helical span at residues 223–243; sequence FLNALGDVAFAYAGHNVVLEI. Residues 244–264 lie on the Cytoplasmic side of the membrane; it reads QATIPSTPEKPSKIAMWKGVV. Residues 265–285 traverse the membrane as a helical segment; that stretch reads VAYIVVAICYFPVAFVCYYIF. The Extracellular segment spans residues 286–300; sequence GNSVDDNILMTLEKP. The chain crosses the membrane as a helical span at residues 301 to 321; that stretch reads IWLIAIANAFVVVHVIGSYQI. The Cytoplasmic portion of the chain corresponds to 322–347; the sequence is YAMPVFDMLETFLVKKMMFAPSFKLR. Residues 348 to 370 traverse the membrane as a helical segment; that stretch reads FITRTLYVAFTMFVAICIPFFGG. Residues 371 to 373 lie on the Extracellular side of the membrane; it reads LLG. A helical membrane pass occupies residues 374 to 396; sequence FFGGFAFAPTTYYLPCIMWLCIK. Residues 397 to 406 are Cytoplasmic-facing; the sequence is KPKKYGLSWC. A helical transmembrane segment spans residues 407–427; that stretch reads INWFCIVVGVILTILAPIGGL. Residues 428-441 are Extracellular-facing; the sequence is RTIIISAKNYEFFS.

The protein belongs to the amino acid/polyamine transporter 2 family. Amino acid/auxin permease (AAAP) (TC 2.A.18.2) subfamily.

It localises to the cell membrane. Amino acid transporter. The chain is Lysine histidine transporter-like 2 from Arabidopsis thaliana (Mouse-ear cress).